The following is a 37-amino-acid chain: GIFTLIKGAAKLIGKTVAKEAGKTGLELMACKITNQC.

An intrachain disulfide couples C31 to C37.

In terms of tissue distribution, expressed by the skin glands.

It localises to the secreted. Its function is as follows. Has antibacterial activity against E.coli and S.aureus strains. The protein is Esculentin-2JDb of Odorrana jingdongensis (Jingdong frog).